Reading from the N-terminus, the 80-residue chain is CLAVATA3/ESR (CLE)-related protein 40 (80 aa).

Residues 1–25 (MAAMKYKGSVFIILVILLLSSSLLA) form the signal peptide. Positions 45–80 (MKKEKKIDGGTANEVEERQVPTGSDPLHHKHIPFTP) are disordered. At Pro-65 the chain carries Hydroxyproline.

The protein belongs to the CLV3/ESR signal peptide family. As to expression, mostly expressed at low levels in stems and apex, and, to a lower extent, in roots, seedlings, leaves, flowers, siliques and pollen.

It is found in the secreted. It localises to the extracellular space. In terms of biological role, extracellular signal peptide secreted by differentiated root cells that regulates root cell fate. Acts with ACR4 as a ligand-receptor pair in a signal transduction pathway, coordinating movement of the root tip and organization of cell divisions in the root meristem. Promotes cell differentiation in the distal root meristem in a dose-dependent manner, especially the transition from columella stem cells (CSC) daughters into columella cells (CCs). Induces ACR4 expression in root quiescent center (QC). Involved in WUX5 QC-specific expression pattern regulation. Regulates the transition of protophloem cells from proliferation to differentiation, thus impinging on postembryonic growth capacity of the root meristem; this signaling pathway requires CRN and CLV2. The protein is CLAVATA3/ESR (CLE)-related protein 40 of Arabidopsis thaliana (Mouse-ear cress).